Reading from the N-terminus, the 3414-residue chain is Genome polyprotein (3414 aa).

Residues 1–27 form a disordered region; that stretch reads MAGKAVLKGKGGGPPRRASKVAPKKTR. Over 1 to 98 the chain is Cytoplasmic; it reads MAGKAVLKGK…LHRRGSRRTT (98 aa). A compositionally biased stretch (basic residues) spans 17–27; the sequence is RASKVAPKKTR. A propeptide spans 97–117 (ER anchor for the capsid protein C, removed in mature form by serine protease NS3); that stretch reads TTIDWMTPLLITVMLGMCLTA. The chain crosses the membrane as a helical span at residues 99–117; that stretch reads IDWMTPLLITVMLGMCLTA. Topologically, residues 118-242 are extracellular; sequence TVRRERDGSM…HLTRVEGWVW (125 aa). Asn144 carries an N-linked (GlcNAc...) asparagine; by host glycan. A helical membrane pass occupies residues 243-260; sequence KNKLFTLSLVMVAWLMVD. A topological domain (cytoplasmic) is located at residue Gly261. The chain crosses the membrane as a helical span at residues 262–280; that stretch reads LLPRILIVVVALALVPAYA. Topologically, residues 281 to 727 are extracellular; sequence SRCTHLENRD…HTVLGGAFNT (447 aa). 6 disulfides stabilise this stretch: Cys283–Cys310, Cys340–Cys396, Cys340–Cys401, Cys354–Cys385, Cys372–Cys396, and Cys372–Cys401. The fusion peptide stretch occupies residues 378-391; it reads DRGWGNHCGLFGKG. A glycan (N-linked (GlcNAc...) asparagine; by host) is linked at Asn434. Cystine bridges form between Cys466-Cys570 and Cys587-Cys618. A helical transmembrane segment spans residues 728–748; that stretch reads LLGGVGFLPKILLGVAMAWLG. Over 749–755 the chain is Cytoplasmic; sequence LNMRNPT. A helical membrane pass occupies residues 756 to 776; that stretch reads LSMGFLLSGGLVLAMTLGVGA. Over 777 to 1187 the chain is Extracellular; the sequence is DVGCAVDTER…LVSVESLFRY (411 aa). 6 cysteine pairs are disulfide-bonded: Cys780–Cys791, Cys831–Cys920, Cys955–Cys1000, Cys1057–Cys1106, Cys1068–Cys1090, and Cys1089–Cys1093. 3 N-linked (GlcNAc...) asparagine; by host glycosylation sites follow: Asn861, Asn983, and Asn999. A helical transmembrane segment spans residues 1188 to 1208; that stretch reads LVAVGLVFQLELGPEAVAMVL. Topologically, residues 1209-1232 are cytoplasmic; sequence LQAVFEMRTCLLSGFVLRRSITTR. The chain crosses the membrane as a helical span at residues 1233–1253; that stretch reads EIVTVYFLLLVLEMGIPVKGL. The Lumenal portion of the chain corresponds to 1254–1267; sequence EHLWRWTDALAMGA. A helical transmembrane segment spans residues 1268 to 1288; it reads IIFRACTAEGKTGIGLLLAAF. Residues 1289 to 1300 are Cytoplasmic-facing; it reads MTQSDMNIIHDG. A helical transmembrane segment spans residues 1301–1319; it reads LTAFLCVATTMAIWRYIRG. The Lumenal segment spans residues 1320-1325; the sequence is QGERKG. A helical transmembrane segment spans residues 1326-1346; sequence LTWIVPLAGILGGEGSGVRLL. The Cytoplasmic segment spans residues 1347 to 1359; the sequence is AFWELAASRGRRS. A helical transmembrane segment spans residues 1360–1378; it reads FNEPMTVIGVMLTLASGMM. Over 1379 to 1382 the chain is Lumenal; that stretch reads RHTS. A helical membrane pass occupies residues 1383 to 1403; it reads QEAVCAMALAAFLLLMLTLGT. The Cytoplasmic segment spans residues 1404-1454; that stretch reads RKMQLLAEWSGNIEWNPELTSEGGEVSLRVRQDALGNLHLTELEKEERMMA. Positions 1410–1449 are interacts with and activates NS3 protease; the sequence is AEWSGNIEWNPELTSEGGEVSLRVRQDALGNLHLTELEKE. An intramembrane region (helical) is located at residues 1455–1475; it reads FWLVVGLIASAFHWSGILIVM. Over 1476–2160 the chain is Cytoplasmic; the sequence is GLWTISEMLG…RIGERDAPEA (685 aa). Residues 1490 to 1669 enclose the Peptidase S7 domain; that stretch reads TDLVFSGCSE…EVEKSRPNLP (180 aa). Catalysis depends on charge relay system; for serine protease NS3 activity residues His1543, Asp1567, and Ser1627. One can recognise a Helicase ATP-binding domain in the interval 1675-1831; sequence TGWTAKGQIT…ESNGAIASEE (157 aa). Position 1688 to 1695 (1688 to 1695) interacts with ATP; sequence MHPGSGKT. A DEAH box motif is present at residues 1779–1782; it reads DEAH. Positions 1841 to 2000 constitute a Helicase C-terminal domain; sequence DGFDWITEYE…TARGPVATFY (160 aa). Lys1883 bears the N6-acetyllysine; by host mark. The helical transmembrane segment at 2161–2181 threads the bilayer; sequence FLTAVEMLVLGLATLGVVWCF. Residues 2182 to 2189 are Lumenal-facing; that stretch reads VVRTSVSR. Positions 2190 to 2209 form an intramembrane region, helical; that stretch reads MVLGTLVLATSLIFLWAGGV. Residue Gly2210 is a topological domain, lumenal. Residues 2211–2231 form a helical membrane-spanning segment; sequence YGNMAGVALVFYTLLTVLQPE. Topologically, residues 2232-2238 are cytoplasmic; the sequence is TGKQRSS. Residues 2239 to 2259 traverse the membrane as a helical segment; the sequence is DDNKLAYFLLTLCGLAGMVAA. The Lumenal segment spans residues 2260 to 2296; that stretch reads NEMGLLEKTKADLAALFARDQGETVRWGEWTNLDIQP. The helical intramembrane region spans 2297 to 2315; sequence ARSWGTYVLVVSLFTPYML. Residues 2316-2343 lie on the Lumenal side of the membrane; it reads HQLQTRIQQLVNSAVASGAQAMRDLGGG. The segment at residues 2344–2364 is an intramembrane region (helical); the sequence is TPFFGVAGHVLALGVASLVGA. The Lumenal segment spans residues 2365 to 2368; the sequence is TPTS. A helical transmembrane segment spans residues 2369-2389; it reads LILGVGLAAFHLAIVVSGLEA. Over 2390 to 2432 the chain is Cytoplasmic; sequence ELTQRAHKVFFSAMVRNPMVDGDVINPFGDGEAKPALYERKLS. Residues 2433-2453 traverse the membrane as a helical segment; that stretch reads LILALVLCLASVVMNRTFVAV. Topologically, residues 2454-2477 are lumenal; it reads TEAGAVGVAAAMQLLRPEMDVLWT. A helical membrane pass occupies residues 2478-2498; sequence MPVACGMSGVVRGSLWGLLPL. The Cytoplasmic portion of the chain corresponds to 2499 to 3414; it reads GHRLWLRTTG…WELKLESSIF (916 aa). One can recognise an mRNA cap 0-1 NS5-type MT domain in the interval 2512–2776; sequence GGSEGDTLGD…EIDLGVGTRS (265 aa). Ser2567 contributes to the S-adenosyl-L-methionine binding site. Ser2567 carries the post-translational modification Phosphoserine. Lys2572 serves as the catalytic For 2'-O-MTase activity. The S-adenosyl-L-methionine site is built by Gly2597, Trp2598, Thr2615, Ile2616, Asp2642, and Val2643. The For 2'-O-MTase activity role is filled by Asp2657. Ile2658 contacts S-adenosyl-L-methionine. Catalysis depends on for 2'-O-MTase activity residues Lys2694 and Glu2730. Positions 2730–2734 are interaction with host SCRIB; the sequence is EMYFS. Tyr2732 is an S-adenosyl-L-methionine binding site. Zn(2+)-binding residues include Glu2950, His2954, Cys2959, and Cys2962. The RdRp catalytic domain maps to 3040-3189; the sequence is GLFYADDTAG…RPVDDRFSKA (150 aa). Residues His3224, Cys3240, and Cys3359 each contribute to the Zn(2+) site.

This sequence in the N-terminal section; belongs to the class I-like SAM-binding methyltransferase superfamily. mRNA cap 0-1 NS5-type methyltransferase family. In terms of assembly, homodimer. Interacts (via N-terminus) with host EXOC1 (via C-terminus); this interaction results in EXOC1 degradation through the proteasome degradation pathway. Forms heterodimers with envelope protein E in the endoplasmic reticulum and Golgi. As to quaternary structure, homodimer; in the endoplasmic reticulum and Golgi. Interacts with protein prM. Interacts with non-structural protein 1. In terms of assembly, homodimer; Homohexamer when secreted. Interacts with envelope protein E. Interacts (via N-terminus) with serine protease NS3. As to quaternary structure, forms a heterodimer with serine protease NS3. May form homooligomers. In terms of assembly, forms a heterodimer with NS2B. Interacts with non-structural protein 2A (via N-terminus). Interacts with NS4B. Interacts with unphosphorylated RNA-directed RNA polymerase NS5; this interaction stimulates RNA-directed RNA polymerase NS5 guanylyltransferase activity. Interacts with serine protease NS3. Interacts with NS1. As to quaternary structure, homodimer. Interacts with host STAT2; this interaction inhibits the phosphorylation of the latter, and, when all viral proteins are present (polyprotein), targets STAT2 for degradation. Interacts with serine protease NS3. Interacts with host SCRIB; this interaction targets NS5 to the cell membrane periphery and nucleus, thereby allowing efficient host nuclear STAT1 inhibition. In terms of processing, specific enzymatic cleavages in vivo yield mature proteins. Cleavages in the lumen of endoplasmic reticulum are performed by host signal peptidase, whereas cleavages in the cytoplasmic side are performed by serine protease NS3. Signal cleavage at the 2K-4B site requires a prior NS3 protease-mediated cleavage at the 4A-2K site. Cleaved in post-Golgi vesicles by a host furin, releasing the mature small envelope protein M, and peptide pr. This cleavage is incomplete as up to 30% of viral particles still carry uncleaved prM. Post-translationally, N-glycosylated. In terms of processing, N-glycosylated. The excreted form is glycosylated and this is required for efficient secretion of the protein from infected cells. Acetylated by host KAT5. Acetylation modulates NS3 RNA-binding and unwinding activities and plays an important positive role for viral replication. Post-translationally, phosphorylated on serines residues. This phosphorylation may trigger NS5 nuclear localization.

It is found in the virion. The protein resides in the host nucleus. Its subcellular location is the host cytoplasm. It localises to the host perinuclear region. The protein localises to the secreted. It is found in the virion membrane. The protein resides in the host endoplasmic reticulum membrane. It catalyses the reaction Selective hydrolysis of -Xaa-Xaa-|-Yaa- bonds in which each of the Xaa can be either Arg or Lys and Yaa can be either Ser or Ala.. The catalysed reaction is RNA(n) + a ribonucleoside 5'-triphosphate = RNA(n+1) + diphosphate. The enzyme catalyses a ribonucleoside 5'-triphosphate + H2O = a ribonucleoside 5'-diphosphate + phosphate + H(+). It carries out the reaction ATP + H2O = ADP + phosphate + H(+). It catalyses the reaction a 5'-end (5'-triphosphoguanosine)-ribonucleoside in mRNA + S-adenosyl-L-methionine = a 5'-end (N(7)-methyl 5'-triphosphoguanosine)-ribonucleoside in mRNA + S-adenosyl-L-homocysteine. The catalysed reaction is a 5'-end (N(7)-methyl 5'-triphosphoguanosine)-ribonucleoside in mRNA + S-adenosyl-L-methionine = a 5'-end (N(7)-methyl 5'-triphosphoguanosine)-(2'-O-methyl-ribonucleoside) in mRNA + S-adenosyl-L-homocysteine + H(+). Functionally, plays a role in virus budding by binding to membrane and gathering the viral RNA into a nucleocapsid that forms the core of a mature virus particle. During virus entry, may induce genome penetration in host cytoplasm after hemifusion induced by surface proteins. Can migrate to the cell nucleus where it modulates host functions. Its function is as follows. Inhibits RNA silencing by interfering with host Dicer. Prevents premature fusion activity of envelope proteins in trans-Golgi by binding to envelope protein E at pH6.0. After virion release in extracellular space gets dissociated from E dimers. In terms of biological role, acts as a chaperone for envelope protein E during intracellular virion assembly by masking and inactivating envelope protein E fusion peptide. prM is the only viral peptide matured by host furin in the trans-Golgi network. Presumably to avoid catastrophic activation of the viral fusion activity in acidic GolGi compartment prior to virion release. prM-E cleavage is ineficient, and many virions are only partially matured. These uncleaved prM would play a role in immune evasion. Functionally, may play a role in virus budding. Exerts cytotoxic effects by activating a mitochondrial apoptotic pathway through M extodomain. May display a viroporin activity. Its function is as follows. Binds to host cell surface receptor and mediates fusion between viral and cellular membranes. Envelope protein is synthesized in the endoplasmic reticulum in the form of heterodimer with protein prM. They play a role in virion budding in the ER, and the newly formed immature particle is covered with 60 spikes composed of heterodimer between precursor prM and envelope protein E. The virion is transported to the Golgi apparatus where the low pH causes dissociation of PrM-E heterodimers and formation of E homodimers. prM-E cleavage is ineficient, and many virions are only partially matured. These uncleaved prM would play a role in immune evasion. Involved in immune evasion, pathogenesis and viral replication. Once cleaved off the polyprotein, is targeted to three destinations: the viral replication cycle, the plasma membrane and the extracellular compartment. Essential for viral replication. Required for formation of the replication complex and recruitment of other non-structural proteins to the ER-derived membrane structures. Excreted as a hexameric lipoparticle that plays a role against host immune response. Antagonizing the complement function. Binds to the host macrophages and dendritic cells. Inhibits signal transduction originating from Toll-like receptor 3 (TLR3). In terms of biological role, component of the viral RNA replication complex that functions in virion assembly and antagonizes the host immune response. Functionally, required cofactor for the serine protease function of NS3. May have membrane-destabilizing activity and form viroporins. Its function is as follows. Displays three enzymatic activities: serine protease, NTPase and RNA helicase. NS3 serine protease, in association with NS2B, performs its autocleavage and cleaves the polyprotein at dibasic sites in the cytoplasm: C-prM, NS2A-NS2B, NS2B-NS3, NS3-NS4A, NS4A-2K and NS4B-NS5. NS3 RNA helicase binds RNA and unwinds dsRNA in the 3' to 5' direction. Regulates the ATPase activity of the NS3 helicase activity. NS4A allows NS3 helicase to conserve energy during unwinding. In terms of biological role, functions as a signal peptide for NS4B and is required for the interferon antagonism activity of the latter. Functionally, induces the formation of ER-derived membrane vesicles where the viral replication takes place. Inhibits interferon (IFN)-induced host STAT1 phosphorylation and nuclear translocation, thereby preventing the establishment of cellular antiviral state by blocking the IFN-alpha/beta pathway. Inhibits STAT2 translocation in the nucleus after IFN-alpha treatment. Its function is as follows. Replicates the viral (+) and (-) genome, and performs the capping of genomes in the cytoplasm. NS5 methylates viral RNA cap at guanine N-7 and ribose 2'-O positions. Besides its role in genome replication, also prevents the establishment of cellular antiviral state by blocking the interferon-alpha/beta (IFN-alpha/beta) signaling pathway. Inhibits host TYK2 and STAT2 phosphorylation, thereby preventing activation of JAK-STAT signaling pathway. This is Genome polyprotein from Homo sapiens (Human).